We begin with the raw amino-acid sequence, 180 residues long: Inner membrane-spanning protein YciB (180 aa).

A run of 5 helical transmembrane segments spans residues 22 to 42, 50 to 70, 72 to 92, 121 to 141, and 149 to 169; these read IFVA…FTWL, MTLV…AFHS, LFIK…LLVS, LSWA…AFWL, and FKVF…GVYI.

It belongs to the YciB family.

Its subcellular location is the cell inner membrane. Its function is as follows. Plays a role in cell envelope biogenesis, maintenance of cell envelope integrity and membrane homeostasis. This chain is Inner membrane-spanning protein YciB, found in Yersinia pseudotuberculosis serotype O:1b (strain IP 31758).